The following is a 143-amino-acid chain: Transcriptional regulator MraZ (143 aa).

2 consecutive SpoVT-AbrB domains span residues 5 to 47 (EYSH…PQKE) and 76 to 119 (AAEC…SQEL).

The protein belongs to the MraZ family. In terms of assembly, forms oligomers.

Its subcellular location is the cytoplasm. The protein localises to the nucleoid. The chain is Transcriptional regulator MraZ from Carboxydothermus hydrogenoformans (strain ATCC BAA-161 / DSM 6008 / Z-2901).